The following is a 467-amino-acid chain: Sexual differentiation process putative subtilase-type proteinase isp6 (467 aa).

The Inhibitor I9 domain maps to 86–176; that stretch reads YIIVLQPDLS…AVERDQVVSI (91 aa). Residues 186–467 form the Peptidase S8 domain; that stretch reads PWGLARISHK…NLLAFNGAQE (282 aa). Active-site charge relay system residues include D221, H253, and S409.

It belongs to the peptidase S8 family.

This is Sexual differentiation process putative subtilase-type proteinase isp6 (isp6) from Schizosaccharomyces pombe (strain 972 / ATCC 24843) (Fission yeast).